Reading from the N-terminus, the 158-residue chain is Style cell-cycle inhibitor 1-B (158 aa).

Composition is skewed to basic and acidic residues over residues 1–11 (MGSDKKTTEEK) and 22–47 (PRDE…DKSK). A disordered region spans residues 1–88 (MGSDKKTTEE…DKSKNKFEEL (88 aa)). 2 stretches are compositionally biased toward basic residues: residues 48-58 (KEKHKSHKSKC) and 67-81 (GEKH…KDKS).

Specifically expressed in flowers pistils, especially in stigmas and styles. Barely detected in roots, stems, leaves, sepals, petals and stamen.

The protein resides in the nucleus. Component of the auxin signaling transduction pathway that regulates cell proliferation and differentiation during flowers stigmas and styles development. Involved in the regulation of auxin-related genes. In Nicotiana tabacum (Common tobacco), this protein is Style cell-cycle inhibitor 1-B.